The chain runs to 167 residues: Small ribosomal subunit protein uS5 (167 aa).

Positions 12–75 (LQEKLVQVNR…DAARKNMITV (64 aa)) constitute an S5 DRBM domain.

It belongs to the universal ribosomal protein uS5 family. Part of the 30S ribosomal subunit. Contacts proteins S4 and S8.

Functionally, with S4 and S12 plays an important role in translational accuracy. In terms of biological role, located at the back of the 30S subunit body where it stabilizes the conformation of the head with respect to the body. The sequence is that of Small ribosomal subunit protein uS5 from Hahella chejuensis (strain KCTC 2396).